The following is a 597-amino-acid chain: Elongation factor 4 (597 aa).

A tr-type G domain is found at 2–184; that stretch reads KHIRNFSIIA…KIVSAIPAPE (183 aa). GTP is bound by residues 14–19 and 131–134; these read DHGKST and NKID.

The protein belongs to the TRAFAC class translation factor GTPase superfamily. Classic translation factor GTPase family. LepA subfamily.

It is found in the cell inner membrane. The catalysed reaction is GTP + H2O = GDP + phosphate + H(+). Required for accurate and efficient protein synthesis under certain stress conditions. May act as a fidelity factor of the translation reaction, by catalyzing a one-codon backward translocation of tRNAs on improperly translocated ribosomes. Back-translocation proceeds from a post-translocation (POST) complex to a pre-translocation (PRE) complex, thus giving elongation factor G a second chance to translocate the tRNAs correctly. Binds to ribosomes in a GTP-dependent manner. In Vibrio vulnificus (strain CMCP6), this protein is Elongation factor 4.